A 225-amino-acid chain; its full sequence is Probable iron export ATP-binding protein FetA (225 aa).

One can recognise an ABC transporter domain in the interval 8 to 225; it reads LQLQNVGYLA…EMQEARYELA (218 aa). Residue 40 to 47 coordinates ATP; it reads GPSGCGKS.

Belongs to the ABC transporter superfamily. In terms of assembly, the complex is composed of two ATP-binding proteins (FetA) and two transmembrane proteins (FetB).

Its subcellular location is the cell inner membrane. In terms of biological role, part of the ABC transporter complex FetAB, which is probably involved in iron export and enhances resistance to H(2)O(2)-mediated oxidative stress. Probably responsible for energy coupling to the transport system. The protein is Probable iron export ATP-binding protein FetA (fetA) of Escherichia coli (strain K12).